Reading from the N-terminus, the 714-residue chain is GATA zinc finger domain-containing protein 10 (714 aa).

Disordered regions lie at residues 28–97, 115–180, 266–362, 394–419, 454–476, and 528–621; these read YIQQ…NKQI, TMPH…QQQQ, MPMN…QQQQ, QQQQQQPQYHNGMPHHMQQHSPESMD, MHLQQQQQNQQNQQIQQQHQQIQ, and IQQQ…RRRT. 2 stretches are compositionally biased toward low complexity: residues 30–94 and 130–147; these read QQQQ…NNNN and QQQQQQQQQHYQQQQHPH. A compositionally biased stretch (basic residues) spans 148–168; sequence QQQHPHQQQHPHQQQHPHQQQ. The span at 169 to 180 shows a compositional bias: low complexity; it reads HPHQQQIQQQQQ. Residues 271 to 282 are compositionally biased toward polar residues; that stretch reads GGNSRKNSFDMY. Composition is skewed to low complexity over residues 283–322 and 340–362; these read NNNNNNNNNNNINNNNNNNNNNNINNNNNNNNNNNNNNNI and QHQQQHQQQQHQQQHQQQHQQQQ. 2 stretches are compositionally biased toward low complexity: residues 457–476 and 528–549; these read QQQQQNQQNQQIQQQHQQIQ and IQQQQQSIAKQQMPQQQNTPNN. Residues 550-569 show a composition bias toward polar residues; the sequence is GSPSSSDGKSPVNSNTAITS. A compositionally biased stretch (low complexity) spans 570–588; that stretch reads NNNNNNNNNNNNNNNNNNN. A GATA-type zinc finger spans residues 631-656; sequence CHYCEVTETPEWRRGPDGDHTLCNAC. Residues 661-694 are a coiled coil; sequence AKSQKKLAREKELEKQKELEREKERENTRKHSID. The span at 667-693 shows a compositional bias: basic and acidic residues; sequence LAREKELEKQKELEREKERENTRKHSI. Residues 667-714 are disordered; the sequence is LAREKELEKQKELEREKERENTRKHSIDFMLMNDTSSAPTNSQNPTPN. Residues 699 to 714 show a composition bias toward polar residues; the sequence is NDTSSAPTNSQNPTPN.

The protein is GATA zinc finger domain-containing protein 10 (gtaJ) of Dictyostelium discoideum (Social amoeba).